The sequence spans 316 residues: MSLDVVVVMDPIASIKIAKDTTFAMLLEAQRRGHRLHYVRPGGLSLHEGRAVAQVAPLSVREDKASWFTLGAFTELVFGPGQVVLMRKDPPVDAEFIYDTQVLAVAQRAGAQVVNDPQGLRDYNEKLAALLFPQCCPPTLVSRDAAALKAFVLAHGQAVLKPLDGMGGRSIFRSGTGDPNLNVILETLTDGGRKLTLAQRFIPDITAGDKRILLVDGEPVDYCLARIPQGDEFRGNLAAGGRGEGRPLSERDRWIAAQVGPEMKRRGMRFVGLDVIGDYLTEVNVTSPTCVRELDAQFGLNIAGLLFDAIEAGTAQ.

The ATP-grasp domain occupies 124-311 (NEKLAALLFP…IAGLLFDAIE (188 aa)). 151 to 208 (FVLAHGQAVLKPLDGMGGRSIFRSGTGDPNLNVILETLTDGGRKLTLAQRFIPDITAG) contacts ATP. Positions 282 and 284 each coordinate Mg(2+).

This sequence belongs to the prokaryotic GSH synthase family. The cofactor is Mg(2+). Mn(2+) serves as cofactor.

It catalyses the reaction gamma-L-glutamyl-L-cysteine + glycine + ATP = glutathione + ADP + phosphate + H(+). It functions in the pathway sulfur metabolism; glutathione biosynthesis; glutathione from L-cysteine and L-glutamate: step 2/2. The sequence is that of Glutathione synthetase from Xanthomonas campestris pv. campestris (strain ATCC 33913 / DSM 3586 / NCPPB 528 / LMG 568 / P 25).